A 194-amino-acid polypeptide reads, in one-letter code: Naphthalene 1,2-dioxygenase system, small oxygenase component (194 aa).

It belongs to the bacterial ring-hydroxylating dioxygenase beta subunit family. As to quaternary structure, the naphthalene dioxygenase (NDO) multicomponent enzyme system is composed of an electron transfer component and a dioxygenase component (iron sulfur protein (ISP)). The electron transfer component is composed of a ferredoxin reductase (NagAa) and a ferredoxin (NagAb), and the dioxygenase component is formed by a large alpha subunit (NagAc) and a small beta subunit (NagAd).

It functions in the pathway aromatic compound metabolism; naphthalene degradation. Functionally, component of the naphthalene dioxygenase (NDO) multicomponent enzyme system which catalyzes the incorporation of both atoms of molecular oxygen into naphthalene to form cis-(1R,2S)-dihydroxy-1,2-dihydronaphthalene. Also able to use styrene as substrate. The beta subunit seems to have a structural role in the holoenzyme. The chain is Naphthalene 1,2-dioxygenase system, small oxygenase component from Ralstonia sp.